We begin with the raw amino-acid sequence, 178 residues long: Nicotinamide-nucleotide adenylyltransferase (178 aa).

Belongs to the archaeal NMN adenylyltransferase family.

The protein localises to the cytoplasm. The catalysed reaction is beta-nicotinamide D-ribonucleotide + ATP + H(+) = diphosphate + NAD(+). It participates in cofactor biosynthesis; NAD(+) biosynthesis; NAD(+) from nicotinamide D-ribonucleotide: step 1/1. The polypeptide is Nicotinamide-nucleotide adenylyltransferase (Thermoplasma volcanium (strain ATCC 51530 / DSM 4299 / JCM 9571 / NBRC 15438 / GSS1)).